The chain runs to 226 residues: ATP synthase F(0) complex subunit a (226 aa).

6 helical membrane passes run 6 to 26 (FASFITPVILGLPLVTLIVLF), 68 to 88 (WALMLMSLILFIGSTNLLGLL), 97 to 117 (QLSMNLGMAIPLWAGAVITGF), 138 to 158 (IPMLVIIETISLFIQPVALAV), 164 to 184 (ITAGHLLIHLIGGATLALMSI), and 189 to 209 (ALITFTILILLTILEFAVAMI).

Belongs to the ATPase A chain family. Component of the ATP synthase complex composed at least of ATP5F1A/subunit alpha, ATP5F1B/subunit beta, ATP5MC1/subunit c (homooctomer), MT-ATP6/subunit a, MT-ATP8/subunit 8, ATP5ME/subunit e, ATP5MF/subunit f, ATP5MG/subunit g, ATP5MK/subunit k, ATP5MJ/subunit j, ATP5F1C/subunit gamma, ATP5F1D/subunit delta, ATP5F1E/subunit epsilon, ATP5PF/subunit F6, ATP5PB/subunit b, ATP5PD/subunit d, ATP5PO/subunit OSCP. ATP synthase complex consists of a soluble F(1) head domain (subunits alpha(3) and beta(3)) - the catalytic core - and a membrane F(0) domain - the membrane proton channel (subunits c, a, 8, e, f, g, k and j). These two domains are linked by a central stalk (subunits gamma, delta, and epsilon) rotating inside the F1 region and a stationary peripheral stalk (subunits F6, b, d, and OSCP). Interacts with DNAJC30; interaction is direct.

It is found in the mitochondrion inner membrane. It carries out the reaction H(+)(in) = H(+)(out). Its function is as follows. Subunit a, of the mitochondrial membrane ATP synthase complex (F(1)F(0) ATP synthase or Complex V) that produces ATP from ADP in the presence of a proton gradient across the membrane which is generated by electron transport complexes of the respiratory chain. ATP synthase complex consist of a soluble F(1) head domain - the catalytic core - and a membrane F(1) domain - the membrane proton channel. These two domains are linked by a central stalk rotating inside the F(1) region and a stationary peripheral stalk. During catalysis, ATP synthesis in the catalytic domain of F(1) is coupled via a rotary mechanism of the central stalk subunits to proton translocation. With the subunit c (ATP5MC1), forms the proton-conducting channel in the F(0) domain, that contains two crucial half-channels (inlet and outlet) that facilitate proton movement from the mitochondrial intermembrane space (IMS) into the matrix. Protons are taken up via the inlet half-channel and released through the outlet half-channel, following a Grotthuss mechanism. The protein is ATP synthase F(0) complex subunit a of Bos indicus (Zebu).